Consider the following 194-residue polypeptide: MSQIKLIVGLANPGAKYEGTRHNAGEWLVNELARMYNTSLKDEAKYFGKTAKINTVNGDVWLLIPTTFMNLSGKAVGALAHFFRIKAEEILIAHDELDLPPGVAKLKQGGGHGGHNGLKDIISALGNNNNFYRIRLGIGHPGHKDQVAGYVLSKPAPQDQQKINAVIDEASRCLEILFKDGVTSATNRLNSFKA.

Tyr-17 is a binding site for tRNA. The active-site Proton acceptor is His-22. TRNA is bound by residues Phe-68, Asn-70, and Asn-116.

The protein belongs to the PTH family. In terms of assembly, monomer.

Its subcellular location is the cytoplasm. The catalysed reaction is an N-acyl-L-alpha-aminoacyl-tRNA + H2O = an N-acyl-L-amino acid + a tRNA + H(+). Its function is as follows. Hydrolyzes ribosome-free peptidyl-tRNAs (with 1 or more amino acids incorporated), which drop off the ribosome during protein synthesis, or as a result of ribosome stalling. Functionally, catalyzes the release of premature peptidyl moieties from peptidyl-tRNA molecules trapped in stalled 50S ribosomal subunits, and thus maintains levels of free tRNAs and 50S ribosomes. This chain is Peptidyl-tRNA hydrolase, found in Haemophilus ducreyi (strain 35000HP / ATCC 700724).